Consider the following 161-residue polypeptide: SsrA-binding protein (161 aa).

Positions 137–161 are disordered; sequence HDKRTDSKEKDWNRDKARIMKSSLR. Residues 139–154 show a composition bias toward basic and acidic residues; sequence KRTDSKEKDWNRDKAR.

It belongs to the SmpB family.

It is found in the cytoplasm. Functionally, required for rescue of stalled ribosomes mediated by trans-translation. Binds to transfer-messenger RNA (tmRNA), required for stable association of tmRNA with ribosomes. tmRNA and SmpB together mimic tRNA shape, replacing the anticodon stem-loop with SmpB. tmRNA is encoded by the ssrA gene; the 2 termini fold to resemble tRNA(Ala) and it encodes a 'tag peptide', a short internal open reading frame. During trans-translation Ala-aminoacylated tmRNA acts like a tRNA, entering the A-site of stalled ribosomes, displacing the stalled mRNA. The ribosome then switches to translate the ORF on the tmRNA; the nascent peptide is terminated with the 'tag peptide' encoded by the tmRNA and targeted for degradation. The ribosome is freed to recommence translation, which seems to be the essential function of trans-translation. The chain is SsrA-binding protein from Aliivibrio salmonicida (strain LFI1238) (Vibrio salmonicida (strain LFI1238)).